The following is a 155-amino-acid chain: Ribosomal RNA large subunit methyltransferase H (155 aa).

S-adenosyl-L-methionine is bound by residues Leu-72, Gly-103, and 122-127; that span reads LSPLTL.

It belongs to the RNA methyltransferase RlmH family. In terms of assembly, homodimer.

Its subcellular location is the cytoplasm. It catalyses the reaction pseudouridine(1915) in 23S rRNA + S-adenosyl-L-methionine = N(3)-methylpseudouridine(1915) in 23S rRNA + S-adenosyl-L-homocysteine + H(+). Its function is as follows. Specifically methylates the pseudouridine at position 1915 (m3Psi1915) in 23S rRNA. The sequence is that of Ribosomal RNA large subunit methyltransferase H from Aeromonas hydrophila subsp. hydrophila (strain ATCC 7966 / DSM 30187 / BCRC 13018 / CCUG 14551 / JCM 1027 / KCTC 2358 / NCIMB 9240 / NCTC 8049).